The sequence spans 198 residues: MEERNEQVVEETKEAQTEEATIEKNSEESVTEEATEETVVEEKSEAALLQEKVDELQAKLTETEGRMLRLQADFENYKRRVQLDKQAAEKYRAQSLVSDILPALDNFERAMQVEASDEQTKSLLQGMEMVYRQLLEALNKEGVEMIEAVGKQFDPHEHQAVMQVEDSEFESNAVVEEFQKGYKLKDRVIRPSMVKVNQ.

Residues 1–27 are compositionally biased toward basic and acidic residues; it reads MEERNEQVVEETKEAQTEEATIEKNSE. Residues 1 to 39 are disordered; that stretch reads MEERNEQVVEETKEAQTEEATIEKNSEESVTEEATEETV. Over residues 29-39 the composition is skewed to acidic residues; sequence SVTEEATEETV.

Belongs to the GrpE family. In terms of assembly, homodimer.

It is found in the cytoplasm. In terms of biological role, participates actively in the response to hyperosmotic and heat shock by preventing the aggregation of stress-denatured proteins, in association with DnaK and GrpE. It is the nucleotide exchange factor for DnaK and may function as a thermosensor. Unfolded proteins bind initially to DnaJ; upon interaction with the DnaJ-bound protein, DnaK hydrolyzes its bound ATP, resulting in the formation of a stable complex. GrpE releases ADP from DnaK; ATP binding to DnaK triggers the release of the substrate protein, thus completing the reaction cycle. Several rounds of ATP-dependent interactions between DnaJ, DnaK and GrpE are required for fully efficient folding. The polypeptide is Protein GrpE (Bacillus cytotoxicus (strain DSM 22905 / CIP 110041 / 391-98 / NVH 391-98)).